A 139-amino-acid chain; its full sequence is Antitoxin HicB 2 (139 aa).

One can recognise an HTH cro/C1-type domain in the interval methionine 87–valine 137. The segment at residues glutamate 96–serine 113 is a DNA-binding region (H-T-H motif).

This sequence belongs to the HicB antitoxin family. As to quaternary structure, probably forms a complex with the probable mRNA interferase HicA2 (its cognate toxin); when complexed with HicA inhibits the toxin activity.

Antitoxin component of a type II toxin-antitoxin (TA) system. Functions as an mRNA interferase antitoxin preventing effects of the HicA 2 toxin. The chain is Antitoxin HicB 2 (hicB2) from Photorhabdus laumondii subsp. laumondii (strain DSM 15139 / CIP 105565 / TT01) (Photorhabdus luminescens subsp. laumondii).